The sequence spans 723 residues: Lim and transglutaminase domain protein ltd-1 (723 aa).

The LIM zinc-binding domain occupies 5-72; the sequence is QHCNRCGKQV…SNHVPIAGPH (68 aa).

This sequence belongs to the transglutaminase-like superfamily. In terms of tissue distribution, expressed in the Y and U rectal epithelial cells, in marginal cells of the terminal bulb and isthmus of the pharynx (at protein level).

The protein resides in the cytoplasm. Its subcellular location is the cytoskeleton. Its function is as follows. Cytoskeleton-associated protein. May play a role in hypodermal cell development. The protein is Lim and transglutaminase domain protein ltd-1 of Caenorhabditis elegans.